We begin with the raw amino-acid sequence, 246 residues long: U2 small nuclear ribonucleoprotein A' (246 aa).

LRR repeat units follow at residues 19-40, 42-63, 64-85, and 88-109; these read RDRE…GVTR, QNDA…PLLQ, QLKT…IGHS, and ALHS…VHLS. The 39-residue stretch at 122–160 folds into the LRRCT domain; it reads TPASREAQYREFVIWKLPQVRVLDYQRIKDKERARAKDL.

This sequence belongs to the U2 small nuclear ribonucleoprotein A family. As to quaternary structure, associated with the spliceosome.

Its subcellular location is the nucleus. In terms of biological role, involved in pre-mRNA splicing. The polypeptide is U2 small nuclear ribonucleoprotein A' (LEA1) (Mycosarcoma maydis (Corn smut fungus)).